A 328-amino-acid polypeptide reads, in one-letter code: Tetraacyldisaccharide 4'-kinase (328 aa).

An ATP-binding site is contributed by 55–62 (TAGGNGKT).

This sequence belongs to the LpxK family.

The catalysed reaction is a lipid A disaccharide + ATP = a lipid IVA + ADP + H(+). The protein operates within glycolipid biosynthesis; lipid IV(A) biosynthesis; lipid IV(A) from (3R)-3-hydroxytetradecanoyl-[acyl-carrier-protein] and UDP-N-acetyl-alpha-D-glucosamine: step 6/6. Its function is as follows. Transfers the gamma-phosphate of ATP to the 4'-position of a tetraacyldisaccharide 1-phosphate intermediate (termed DS-1-P) to form tetraacyldisaccharide 1,4'-bis-phosphate (lipid IVA). The protein is Tetraacyldisaccharide 4'-kinase of Escherichia coli O157:H7.